The following is a 721-amino-acid chain: Ribonucleoside-diphosphate reductase subunit alpha (721 aa).

Substrate is bound by residues Thr168, 184-185 (SC), Gly213, 393-397 (NLCSE), and 595-599 (PTGSI). The cysteines at positions 185 and 422 are disulfide-linked. The active-site Proton acceptor is Asn393. The Cysteine radical intermediate role is filled by Cys395. Glu397 acts as the Proton acceptor in catalysis.

It belongs to the ribonucleoside diphosphate reductase large chain family. Tetramer of two alpha and two beta subunits.

The enzyme catalyses a 2'-deoxyribonucleoside 5'-diphosphate + [thioredoxin]-disulfide + H2O = a ribonucleoside 5'-diphosphate + [thioredoxin]-dithiol. With respect to regulation, under complex allosteric control mediated by deoxynucleoside triphosphates and ATP binding. The type of nucleotide bound at the specificity site determines substrate preference. It seems probable that ATP makes the enzyme reduce CDP and UDP, dGTP favors ADP reduction and dTTP favors GDP reduction. In terms of biological role, provides the precursors necessary for DNA synthesis. Catalyzes the biosynthesis of deoxyribonucleotides from the corresponding ribonucleotides. This is Ribonucleoside-diphosphate reductase subunit alpha (nrdE) from Mycobacterium leprae (strain TN).